A 207-amino-acid chain; its full sequence is Large ribosomal subunit protein uL4 (207 aa).

A disordered region spans residues 49-78 (HAVKNRSAVSGGGRKPWRQKGTGRARQGSI).

This sequence belongs to the universal ribosomal protein uL4 family. Part of the 50S ribosomal subunit.

In terms of biological role, one of the primary rRNA binding proteins, this protein initially binds near the 5'-end of the 23S rRNA. It is important during the early stages of 50S assembly. It makes multiple contacts with different domains of the 23S rRNA in the assembled 50S subunit and ribosome. Functionally, forms part of the polypeptide exit tunnel. The chain is Large ribosomal subunit protein uL4 from Streptococcus equi subsp. zooepidemicus (strain MGCS10565).